The following is a 242-amino-acid chain: Ras-like protein family member 11A (242 aa).

Residues 17 to 241 (ESSSDYLLPK…SSKAKASSAL (225 aa)) are small GTPase-like. Residues 34–41 (GAGCVGKS), 81–88 (DTPGGIQA), and 147–150 (NKGD) contribute to the GTP site.

The protein belongs to the small GTPase superfamily. Ras family. Interacts with UBF/UBTF.

The protein localises to the nucleus. It is found in the nucleolus. The catalysed reaction is GTP + H2O = GDP + phosphate + H(+). In terms of biological role, regulator of rDNA transcription. Acts in cooperation UBF/UBTF and positively regulates RNA polymerase I transcription. The polypeptide is Ras-like protein family member 11A (Mus musculus (Mouse)).